The chain runs to 91 residues: Anther-specific protein RTS (91 aa).

The N-terminal stretch at 1–21 (MVRVGAAAAVLVLAAAAAAMA) is a signal peptide.

Functionally, required for tapetum and pollen development. The sequence is that of Anther-specific protein RTS from Oryza sativa subsp. japonica (Rice).